We begin with the raw amino-acid sequence, 821 residues long: Palmitoyltransferase AKR1 (821 aa).

Residues 1 to 118 (MVDKDANNEL…KDTASRKSMD (118 aa)) form a disordered region. Topologically, residues 1-400 (MVDKDANNEL…TIYLNPKIGK (400 aa)) are cytoplasmic. Residues 93–117 (IQDESVNDKTSEPDENKDTASRKSM) show a composition bias toward basic and acidic residues. ANK repeat units lie at residues 142–172 (PSLH…KAND), 176–205 (DGIT…SKAD), 213–243 (LKAS…DPTL), 247–277 (QSYN…STST), 289–318 (CDRT…DVSK), and 322–351 (NLFI…NIFA). A helical transmembrane segment spans residues 401–421 (LVTFFTPYIILPIMFQVCSFY). Residue Asn-422 is a topological domain, lumenal. The chain crosses the membrane as a helical span at residues 423-443 (GFVIPKLFFSVVLFAGSIYIL). Residues 444-463 (QKLVIPTYLAEEKAIPKSPL) lie on the Cytoplasmic side of the membrane. A helical transmembrane segment spans residues 464 to 484 (LAGIFSGTAFWCIVTWAFNII). Over 485–494 (PTLLFKKFIS) the chain is Lumenal. The chain crosses the membrane as a helical span at residues 495-515 (NLVLSAFIYLFVWSFFKAMFI). Over 516 to 589 (NPGYVPVPSD…YNDIGVRNHK (74 aa)) the chain is Cytoplasmic. Residues 546–596 (NFCVNTFVRKPLRSKYSRFNKKLIARFDHYCPWVYNDIGVRNHKLFVVFVY) enclose the DHHC domain. Cys-576 functions as the S-palmitoyl cysteine intermediate in the catalytic mechanism. A helical membrane pass occupies residues 590–610 (LFVVFVYSLNLAVLLFTHLSI). The Lumenal segment spans residues 611–650 (KLFKNTEKMSGYDSDDESQKCWLLSDELCVGYKSHHFQFN). Residues 651–671 (LMLWCLIQYIWIAFLCLVQTF) form a helical membrane-spanning segment. The Cytoplasmic portion of the chain corresponds to 672–821 (QILKGLTTWE…YPPKLADVDA (150 aa)).

The protein belongs to the DHHC palmitoyltransferase family. AKR/ZDHHC17 subfamily.

It localises to the early endosome membrane. The protein resides in the golgi apparatus membrane. It carries out the reaction L-cysteinyl-[protein] + hexadecanoyl-CoA = S-hexadecanoyl-L-cysteinyl-[protein] + CoA. Palmitoyltransferase specific for casein kinase 1. The sequence is that of Palmitoyltransferase AKR1 (AKR1) from Debaryomyces hansenii (strain ATCC 36239 / CBS 767 / BCRC 21394 / JCM 1990 / NBRC 0083 / IGC 2968) (Yeast).